Reading from the N-terminus, the 153-residue chain is Nucleoside diphosphate kinase 3 (153 aa).

Residues K11, F59, R87, T93, R104, and N114 each contribute to the ATP site. H117 (pros-phosphohistidine intermediate) is an active-site residue.

Belongs to the NDK family. As to quaternary structure, homohexamer. Mg(2+) is required as a cofactor.

The protein resides in the plastid. The protein localises to the chloroplast thylakoid lumen. It carries out the reaction a 2'-deoxyribonucleoside 5'-diphosphate + ATP = a 2'-deoxyribonucleoside 5'-triphosphate + ADP. It catalyses the reaction a ribonucleoside 5'-diphosphate + ATP = a ribonucleoside 5'-triphosphate + ADP. Functionally, major role in the synthesis of nucleoside triphosphates other than ATP. The ATP gamma phosphate is transferred to the NDP beta phosphate via a ping-pong mechanism, using a phosphorylated active-site intermediate. Shows the highest specificity towards GDP. The chain is Nucleoside diphosphate kinase 3 from Spinacia oleracea (Spinach).